Here is a 488-residue protein sequence, read N- to C-terminus: Probable glycine dehydrogenase (decarboxylating) subunit 2 (488 aa).

Position 264 is an N6-(pyridoxal phosphate)lysine (Lys264).

It belongs to the GcvP family. C-terminal subunit subfamily. As to quaternary structure, the glycine cleavage system is composed of four proteins: P, T, L and H. In this organism, the P 'protein' is a heterodimer of two subunits. Requires pyridoxal 5'-phosphate as cofactor.

It catalyses the reaction N(6)-[(R)-lipoyl]-L-lysyl-[glycine-cleavage complex H protein] + glycine + H(+) = N(6)-[(R)-S(8)-aminomethyldihydrolipoyl]-L-lysyl-[glycine-cleavage complex H protein] + CO2. Functionally, the glycine cleavage system catalyzes the degradation of glycine. The P protein binds the alpha-amino group of glycine through its pyridoxal phosphate cofactor; CO(2) is released and the remaining methylamine moiety is then transferred to the lipoamide cofactor of the H protein. This Methylococcus capsulatus (strain ATCC 33009 / NCIMB 11132 / Bath) protein is Probable glycine dehydrogenase (decarboxylating) subunit 2.